Consider the following 216-residue polypeptide: MVPMHLLGRLEKPLLLLCCASFLLGLALLGIKTDITPVAYFFLTLGGFFLFAYLLVRFLEWGLRSQLQSMQTESPGPSGNARDNEAFEVPVYEEAVVGLESQCRPQELDQPPPYSTVVIPPAPEEEQPSHPEGSRRAKLEQRRMASEGSMAQEGSPGRAPINLRLRGPRAVSTAPDLQSLAAVPTLEPLTPPPAYDVCFGHPDDDSVFYEDNWAPP.

The first 25 residues, 1-25 (MVPMHLLGRLEKPLLLLCCASFLLG), serve as a signal peptide directing secretion. Residues 26 to 34 (LALLGIKTD) lie on the Extracellular side of the membrane. A helical membrane pass occupies residues 35 to 55 (ITPVAYFFLTLGGFFLFAYLL). Residues 56-216 (VRFLEWGLRS…VFYEDNWAPP (161 aa)) are Cytoplasmic-facing. The tract at residues 104 to 163 (RPQELDQPPPYSTVVIPPAPEEEQPSHPEGSRRAKLEQRRMASEGSMAQEGSPGRAPINL) is disordered. A compositionally biased stretch (basic and acidic residues) spans 127 to 145 (QPSHPEGSRRAKLEQRRMA). S146 and S155 each carry phosphoserine.

As to quaternary structure, interacts with isoform 2 of SLC4A1.

It is found in the membrane. Its function is as follows. May be involved in cellular trafficking of proteins such as SLC4A1. This is Transmembrane protein 139 (TMEM139) from Homo sapiens (Human).